The primary structure comprises 269 residues: Phosphate import ATP-binding protein PstB (269 aa).

The 244-residue stretch at 21–264 (SEVRNLSFYY…PKNKQTEDYI (244 aa)) folds into the ABC transporter domain. 53 to 60 (GPSGCGKS) is an ATP binding site.

The protein belongs to the ABC transporter superfamily. Phosphate importer (TC 3.A.1.7) family. The complex is composed of two ATP-binding proteins (PstB), two transmembrane proteins (PstC and PstA) and a solute-binding protein (PstS).

Its subcellular location is the cell inner membrane. The enzyme catalyses phosphate(out) + ATP + H2O = ADP + 2 phosphate(in) + H(+). In terms of biological role, part of the ABC transporter complex PstSACB involved in phosphate import. Responsible for energy coupling to the transport system. This chain is Phosphate import ATP-binding protein PstB, found in Nitrosospira multiformis (strain ATCC 25196 / NCIMB 11849 / C 71).